The chain runs to 256 residues: Imidazole glycerol phosphate synthase subunit HisF (256 aa).

Catalysis depends on residues Asp11 and Asp130.

It belongs to the HisA/HisF family. As to quaternary structure, heterodimer of HisH and HisF.

The protein localises to the cytoplasm. The enzyme catalyses 5-[(5-phospho-1-deoxy-D-ribulos-1-ylimino)methylamino]-1-(5-phospho-beta-D-ribosyl)imidazole-4-carboxamide + L-glutamine = D-erythro-1-(imidazol-4-yl)glycerol 3-phosphate + 5-amino-1-(5-phospho-beta-D-ribosyl)imidazole-4-carboxamide + L-glutamate + H(+). It functions in the pathway amino-acid biosynthesis; L-histidine biosynthesis; L-histidine from 5-phospho-alpha-D-ribose 1-diphosphate: step 5/9. In terms of biological role, IGPS catalyzes the conversion of PRFAR and glutamine to IGP, AICAR and glutamate. The HisF subunit catalyzes the cyclization activity that produces IGP and AICAR from PRFAR using the ammonia provided by the HisH subunit. The protein is Imidazole glycerol phosphate synthase subunit HisF of Cupriavidus taiwanensis (strain DSM 17343 / BCRC 17206 / CCUG 44338 / CIP 107171 / LMG 19424 / R1) (Ralstonia taiwanensis (strain LMG 19424)).